We begin with the raw amino-acid sequence, 872 residues long: Protein translocase subunit SecA (872 aa).

ATP-binding positions include Gln-87, 105-109 (GEGKT), and Asp-500. Positions 855, 857, 866, and 867 each coordinate Zn(2+).

The protein belongs to the SecA family. Monomer and homodimer. Part of the essential Sec protein translocation apparatus which comprises SecA, SecYEG and auxiliary proteins SecDF-YajC and YidC. Zn(2+) is required as a cofactor.

The protein resides in the cell inner membrane. Its subcellular location is the cytoplasm. The enzyme catalyses ATP + H2O + cellular proteinSide 1 = ADP + phosphate + cellular proteinSide 2.. Part of the Sec protein translocase complex. Interacts with the SecYEG preprotein conducting channel. Has a central role in coupling the hydrolysis of ATP to the transfer of proteins into and across the cell membrane, serving both as a receptor for the preprotein-SecB complex and as an ATP-driven molecular motor driving the stepwise translocation of polypeptide chains across the membrane. In Anaplasma marginale (strain St. Maries), this protein is Protein translocase subunit SecA.